Consider the following 354-residue polypeptide: Polyribonucleotide 5'-hydroxyl-kinase PYRAB01840 (354 aa).

36 to 43 (GDVDTGKT) is an ATP binding site.

It depends on a divalent metal cation as a cofactor.

It carries out the reaction a 5'-end dephospho-2'-deoxyribonucleoside-DNA + ATP = a 5'-end 5'-phospho-2'-deoxyribonucleoside-DNA + ADP + H(+). It catalyses the reaction a 5'-end dephospho-ribonucleoside-RNA + ATP = a 5'-end 5'-phospho-ribonucleoside-RNA + ADP + H(+). Functionally, polynucleotide kinase that can phosphorylate the 5'-hydroxyl groups of both single-stranded RNA (ssRNA) and single-stranded DNA (ssDNA). Exhibits a strong preference for ssRNA. The polypeptide is Polyribonucleotide 5'-hydroxyl-kinase PYRAB01840 (Pyrococcus abyssi (strain GE5 / Orsay)).